Consider the following 329-residue polypeptide: Dolichyl-diphosphooligosaccharide--protein glycosyltransferase subunit MAGT1 (329 aa).

The signal sequence occupies residues 1 to 23; that stretch reads MAGLKGLLFGGILFAMCGGLSEG. Residues 24 to 178 are Extracellular-facing; sequence QKKKEMVLSD…DVNIRVIRPP (155 aa). The Thioredoxin domain occupies 41–169; it reads WASKRPVIRM…LARWVADRTD (129 aa). N-linked (GlcNAc...) asparagine glycosylation is present at Asn-65. An intrachain disulfide couples Cys-81 to Cys-84. The chain crosses the membrane as a helical span at residues 179–199; the sequence is NYAGPLMLGLLLAVIGGLVYL. Over 200–212 the chain is Cytoplasmic; that stretch reads RRSNLDFLNNKTG. Residues 213 to 233 traverse the membrane as a helical segment; sequence WALAALCFVLAMTSGQMWNHI. The Extracellular portion of the chain corresponds to 234–258; it reads RGPPYAHKNPHTNQVNYIHGSSQAQ. The chain crosses the membrane as a helical span at residues 259–279; sequence FVAETHIVLLFNGAVTLGMVL. The Cytoplasmic segment spans residues 280–294; that stretch reads LHEAATSDLDVGKRK. Residues 295-315 form a helical membrane-spanning segment; that stretch reads IMCIAGITLVVIFFSWLLSVF. Over 316 to 329 the chain is Extracellular; that stretch reads RSKYHGYPYSFLMT.

Belongs to the OST3/OST6 family. In terms of assembly, accessory component of the STT3B-containing form of the oligosaccharyltransferase (OST) complex.

It is found in the cell membrane. It localises to the endoplasmic reticulum. The protein resides in the endoplasmic reticulum membrane. Its pathway is protein modification; protein glycosylation. Functionally, accessory component of the STT3B-containing form of the N-oligosaccharyl transferase (OST) complex which catalyzes the transfer of a high mannose oligosaccharide from a lipid-linked oligosaccharide donor to an asparagine residue within an Asn-X-Ser/Thr consensus motif in nascent polypeptide chains. May be involved in substrate-specific N-glycosylation involving acceptor sites that are near cysteine residues. Could indirectly play a role in Mg(2+) transport in epithelial cells. This chain is Dolichyl-diphosphooligosaccharide--protein glycosyltransferase subunit MAGT1, found in Xenopus laevis (African clawed frog).